We begin with the raw amino-acid sequence, 397 residues long: GDNF family receptor alpha-3 (397 aa).

The signal sequence occupies residues 1 to 28 (MGLSWSPRPPLLMILLLVLSLWLPLGAG). A disulfide bridge links C48 with C54. N92 and N145 each carry an N-linked (GlcNAc...) asparagine glycan. Cystine bridges form between C159–C215, C166–C172, C183–C193, C188–C236, C217–C224, C245–C313, C252–C258, C269–C285, C278–C337, and C315–C325. N306 carries an N-linked (GlcNAc...) asparagine glycan. N371 carries the GPI-anchor amidated asparagine lipid modification. Positions 372–397 (PALRLQPRLPILSFSILPLILLQTLW) are cleaved as a propeptide — removed in mature form.

The protein belongs to the GDNFR family. Interacts with ARTN ligand and RET: forms a 2:2:2 ternary complex composed of ARTN ligand, GFRA3 and RET receptor. Interacts with SORL1.

The protein localises to the cell membrane. In terms of biological role, receptor for artemin (ARTN), a growth factor that supports the survival of sensory and sympathetic peripheral neurons. ARTN-binding leads to autophosphorylation and activation of the RET receptor. This Mus musculus (Mouse) protein is GDNF family receptor alpha-3 (Gfra3).